The chain runs to 439 residues: Adenylosuccinate synthetase (439 aa).

Residues 25–31, 53–55, and K62 contribute to the GTP site; these read GDEGKGK and GHT. D26 (proton acceptor) is an active-site residue. Mg(2+)-binding residues include D26 and G53. IMP-binding positions include 26–29 and 51–54; these read DEGK and NAGH. H54 functions as the Proton donor in the catalytic mechanism. T141, R155, N232, and T247 together coordinate IMP. GTP is bound at residue T307. 307–313 contacts substrate; it reads TTTKRPR. R311 is a binding site for IMP. Residues R313, 339–341, and 425–427 each bind GTP; these read KLD and GVG.

This sequence belongs to the adenylosuccinate synthetase family. In terms of assembly, homodimer. Mg(2+) serves as cofactor.

It localises to the cytoplasm. It catalyses the reaction IMP + L-aspartate + GTP = N(6)-(1,2-dicarboxyethyl)-AMP + GDP + phosphate + 2 H(+). Its pathway is purine metabolism; AMP biosynthesis via de novo pathway; AMP from IMP: step 1/2. Its function is as follows. Plays an important role in the salvage pathway for purine nucleotide biosynthesis. Catalyzes the first commited step in the biosynthesis of AMP from IMP. The sequence is that of Adenylosuccinate synthetase (ADSS) from Plasmodium berghei (strain Anka).